The chain runs to 513 residues: Flavonoid 3',5'-hydroxylase (513 aa).

Position 446 (Cys-446) interacts with heme.

The protein belongs to the cytochrome P450 family. Heme is required as a cofactor. In terms of tissue distribution, hypocotyl tissues.

It carries out the reaction a 3',5'-unsubstituted flavanone + 2 reduced [NADPH--hemoprotein reductase] + 2 O2 = a 3',5'-dihydroxyflavanone + 2 oxidized [NADPH--hemoprotein reductase] + 2 H2O + 2 H(+). It functions in the pathway pigment biosynthesis; anthocyanin biosynthesis. Functionally, catalyzes the 3'5'-hydroxylation of naringenin and eriodictyol to form 5,7,3,'4',5'-pentahydroxyflavanone and 3',5'-hydroxylation of dihydrokaempferol and dihydroquercetin to form dihydromyricetin. This chain is Flavonoid 3',5'-hydroxylase (CYP75A2), found in Solanum melongena (Eggplant).